The following is a 534-amino-acid chain: Steroid hormone receptor family member cnr14 (534 aa).

Disordered stretches follow at residues 30–53 (SGKT…QWSH) and 119–139 (PATS…GHTT). A compositionally biased stretch (low complexity) spans 119–130 (PATSVTSSLSPP). The nuclear receptor DNA-binding region spans 148 to 223 (ISFCKVCGDK…SGMSKDSVRQ (76 aa)). 2 consecutive NR C4-type zinc fingers follow at residues 151-171 (CKVC…CEGC) and 187-211 (CLKQ…FKKC). In terms of domain architecture, NR LBD spans 252 to 493 (EVDAVYEAVL…PPLVVEMFQL (242 aa)). Residues 502-534 (HNNQENQYTPAPEHQSPQPQQPTPNQQQTPVHC) are disordered. Positions 511–534 (PAPEHQSPQPQQPTPNQQQTPVHC) are enriched in low complexity.

It belongs to the nuclear hormone receptor family. NR1 subfamily. As to expression, most abundant in embryos.

It localises to the nucleus. Functionally, transcriptional regulator which is involved in the sex determination and X chromosome dosage compensation pathways. Directly binds to five 5'-A(G/C)(G/T)(T/G)C(A/G)-3' sites in the promoter of sex-determining factor xol-1 to negatively regulate its expression and promote hermaphrodite development. Together with fox-1 is involved in making the distinction between one and two X-chromosomes. Plays a role in the fox-1-mediated repression of the functionally active isoform (isoform b) of the sex-determining factor xol-1 gene to promote hermaphrodite development. Plays a role in the association of the dosage compensation complex proteins dpy-27 and sdc-3 with the hermaphrodite X chromosomes. This Caenorhabditis elegans protein is Steroid hormone receptor family member cnr14.